The chain runs to 406 residues: 2,3-bisphosphoglycerate-independent phosphoglycerate mutase (406 aa).

The disordered stretch occupies residues 156 to 183 (NLSDKISDSDPHSEGKPPEPIRPLDPSA). Over residues 160-174 (KISDSDPHSEGKPPE) the composition is skewed to basic and acidic residues.

The protein belongs to the BPG-independent phosphoglycerate mutase family. A-PGAM subfamily.

The enzyme catalyses (2R)-2-phosphoglycerate = (2R)-3-phosphoglycerate. The protein operates within carbohydrate degradation; glycolysis; pyruvate from D-glyceraldehyde 3-phosphate: step 3/5. Its function is as follows. Catalyzes the interconversion of 2-phosphoglycerate and 3-phosphoglycerate. This Thermoplasma volcanium (strain ATCC 51530 / DSM 4299 / JCM 9571 / NBRC 15438 / GSS1) protein is 2,3-bisphosphoglycerate-independent phosphoglycerate mutase.